A 388-amino-acid polypeptide reads, in one-letter code: S-adenosylmethionine synthase (388 aa).

H16 lines the ATP pocket. Position 18 (D18) interacts with Mg(2+). K(+) is bound at residue E44. L-methionine-binding residues include E57 and Q100. The flexible loop stretch occupies residues 100–110 (QSPDIAQGVDK). Residues 167-169 (DAK), 233-234 (RF), D242, 248-249 (RK), A265, and K269 contribute to the ATP site. D242 provides a ligand contact to L-methionine. K273 contributes to the L-methionine binding site.

It belongs to the AdoMet synthase family. In terms of assembly, homotetramer; dimer of dimers. It depends on Mg(2+) as a cofactor. K(+) serves as cofactor.

It localises to the cytoplasm. The catalysed reaction is L-methionine + ATP + H2O = S-adenosyl-L-methionine + phosphate + diphosphate. It participates in amino-acid biosynthesis; S-adenosyl-L-methionine biosynthesis; S-adenosyl-L-methionine from L-methionine: step 1/1. Functionally, catalyzes the formation of S-adenosylmethionine (AdoMet) from methionine and ATP. The overall synthetic reaction is composed of two sequential steps, AdoMet formation and the subsequent tripolyphosphate hydrolysis which occurs prior to release of AdoMet from the enzyme. This is S-adenosylmethionine synthase from Polynucleobacter asymbioticus (strain DSM 18221 / CIP 109841 / QLW-P1DMWA-1) (Polynucleobacter necessarius subsp. asymbioticus).